The following is a 429-amino-acid chain: Histidinol dehydrogenase (429 aa).

The NAD(+) site is built by Tyr130, Gln191, and Asn214. Substrate is bound by residues Ser237, Gln259, and His262. 2 residues coordinate Zn(2+): Gln259 and His262. Catalysis depends on proton acceptor residues Glu327 and His328. His328, Asp361, Glu415, and His420 together coordinate substrate. Asp361 is a binding site for Zn(2+). A Zn(2+)-binding site is contributed by His420.

Belongs to the histidinol dehydrogenase family. It depends on Zn(2+) as a cofactor.

It catalyses the reaction L-histidinol + 2 NAD(+) + H2O = L-histidine + 2 NADH + 3 H(+). It participates in amino-acid biosynthesis; L-histidine biosynthesis; L-histidine from 5-phospho-alpha-D-ribose 1-diphosphate: step 9/9. In terms of biological role, catalyzes the sequential NAD-dependent oxidations of L-histidinol to L-histidinaldehyde and then to L-histidine. This chain is Histidinol dehydrogenase, found in Neisseria meningitidis serogroup B (strain ATCC BAA-335 / MC58).